The chain runs to 730 residues: uncharacterized protein (730 aa).

Residues 615-625 (FDKENSFDPSD) show a composition bias toward basic and acidic residues. Disordered stretches follow at residues 615 to 667 (FDKE…SSFS) and 684 to 730 (KSGS…FGKI). Composition is skewed to low complexity over residues 653 to 667 (SSSS…SSFS) and 684 to 701 (KSGS…NSSS). Positions 713 to 723 (KKKKKKKKKKS) are enriched in basic residues.

This is an uncharacterized protein from Saccharomyces cerevisiae (strain ATCC 204508 / S288c) (Baker's yeast).